An 85-amino-acid polypeptide reads, in one-letter code: UPF0297 protein Clos_1665 (85 aa).

The protein belongs to the UPF0297 family.

In Alkaliphilus oremlandii (strain OhILAs) (Clostridium oremlandii (strain OhILAs)), this protein is UPF0297 protein Clos_1665.